The primary structure comprises 316 residues: Aspartate carbamoyltransferase catalytic subunit (316 aa).

Carbamoyl phosphate-binding residues include arginine 56 and threonine 57. Lysine 84 contacts L-aspartate. Residues arginine 106, histidine 139, and glutamine 142 each coordinate carbamoyl phosphate. Residues arginine 172 and arginine 226 each contribute to the L-aspartate site. Carbamoyl phosphate-binding residues include glycine 267 and proline 268.

Belongs to the aspartate/ornithine carbamoyltransferase superfamily. ATCase family. Heterododecamer (2C3:3R2) of six catalytic PyrB chains organized as two trimers (C3), and six regulatory PyrI chains organized as three dimers (R2).

It carries out the reaction carbamoyl phosphate + L-aspartate = N-carbamoyl-L-aspartate + phosphate + H(+). The protein operates within pyrimidine metabolism; UMP biosynthesis via de novo pathway; (S)-dihydroorotate from bicarbonate: step 2/3. Its function is as follows. Catalyzes the condensation of carbamoyl phosphate and aspartate to form carbamoyl aspartate and inorganic phosphate, the committed step in the de novo pyrimidine nucleotide biosynthesis pathway. This is Aspartate carbamoyltransferase catalytic subunit from Mycobacterium sp. (strain JLS).